A 769-amino-acid chain; its full sequence is Serine protease HtrA-like (769 aa).

Residues 1-20 (MDIGKKHVIPKSQYRRKRRE) show a composition bias toward basic residues. The tract at residues 1–390 (MDIGKKHVIP…ATSKLNKGRA (390 aa)) is disordered. Basic and acidic residues-rich tracts occupy residues 21 to 64 (FFHN…ERFK) and 71 to 108 (LEQR…DVSK). A compositionally biased stretch (polar residues) spans 126-137 (YEQNSEATLSTK). Basic and acidic residues predominate over residues 138 to 186 (STDKVESTDMRKLSSDKNKVGHEEQHVLSKPSEHDKETRIDFESSRTDS). Polar residues predominate over residues 247-262 (QQSQNEQTKTYTYGDS). Basic and acidic residues-rich tracts occupy residues 264–296 (QNDK…HIVD) and 310–330 (KTDD…HKQN). Polar residues predominate over residues 331-347 (ADSSETVGYQSQSSASH). Positions 348–364 (RITEKRNNAINDHDKLN) are enriched in basic and acidic residues. Polar residues predominate over residues 366-390 (QKPNAKTSANNNQKKATSKLNKGRA). A helical membrane pass occupies residues 410 to 430 (LVILMGIIILIVILNAIFNNV). Catalysis depends on charge relay system residues His504, Asp534, and Ser619. Residues 680-733 (IASLNSFERQAVKLPGKVKNGVVVDQVDNNGLADQSGLKKGDVITELDGKLLED) enclose the PDZ domain.

The protein belongs to the peptidase S1C family.

It is found in the cell membrane. This chain is Serine protease HtrA-like, found in Staphylococcus aureus (strain MSSA476).